Consider the following 139-residue polypeptide: ATP synthase epsilon chain (139 aa).

Positions 89–110 (EARAEQARAEAEARRREAQSEH) are disordered.

This sequence belongs to the ATPase epsilon chain family. In terms of assembly, F-type ATPases have 2 components, CF(1) - the catalytic core - and CF(0) - the membrane proton channel. CF(1) has five subunits: alpha(3), beta(3), gamma(1), delta(1), epsilon(1). CF(0) has three main subunits: a, b and c.

Its subcellular location is the cell membrane. Produces ATP from ADP in the presence of a proton gradient across the membrane. In Chloroflexus aggregans (strain MD-66 / DSM 9485), this protein is ATP synthase epsilon chain.